The sequence spans 2212 residues: RNA-directed RNA polymerase L (2212 aa).

Positions 30 to 288 are endonuclease; that stretch reads KDALLSQVHP…SHEENDSLDC (259 aa). Residues Glu-55, Asp-93, and Glu-106 each coordinate Mn(2+). Lys-119 is a catalytic residue. The interval 922 to 942 is disordered; it reads MKSSDAREERLQDPKRNEKNA. Over residues 923–942 the composition is skewed to basic and acidic residues; sequence KSSDAREERLQDPKRNEKNA. Positions 1175–1371 constitute a RdRp catalytic domain; the sequence is CDMKMAVNNG…YLSSKLNKFV (197 aa). Asp-1333 is a Mg(2+) binding site.

This sequence belongs to the Bunyavirales RNA polymerase family. As to quaternary structure, homomultimer; the oligomeric structure is essential for the polymerase activity. Interacts with nucleoprotein N. Interacts with protein Z; this interaction inhibits viral transcription and replication, Z partially blocks the product exit tunnel for the releasing nascent RNA product. Mn(2+) is required as a cofactor. Mg(2+) serves as cofactor.

The protein resides in the virion. It localises to the host cytoplasm. It carries out the reaction RNA(n) + a ribonucleoside 5'-triphosphate = RNA(n+1) + diphosphate. RNA-dependent RNA polymerase, which is responsible for the replication and transcription of the viral RNA genome using antigenomic RNA as an intermediate. During transcription, synthesizes subgenomic RNAs and assures their capping by a cap-snatching mechanism, which involves the endonuclease activity cleaving the host capped pre-mRNAs. These short capped RNAs are then used as primers for viral transcription. The 3'-end of subgenomic mRNAs molecules are heterogeneous and not polyadenylated. The replicase function is to direct synthesis of antigenomic and genomic RNA which are encapsidated and non capped. As a consequence of the use of the same enzyme for both transcription and replication, these mechanisms need to be well coordinated. These processes may be regulated by proteins N and Z in a dose-dependent manner. Z protein inhibits the viral polymerase L und thus the viral transcription and RNA synthesis. This is RNA-directed RNA polymerase L from Sabia mammarenavirus (isolate Human/Brasil/SPH114202/1990) (SABV).